Reading from the N-terminus, the 63-residue chain is Small ribosomal subunit protein bS21 (63 aa).

The segment covering 40–52 (KPSVKRKLKSEAA) has biased composition (basic and acidic residues). The tract at residues 40-63 (KPSVKRKLKSEAARKRKNKRGRRY) is disordered. The span at 53-63 (RKRKNKRGRRY) shows a compositional bias: basic residues.

It belongs to the bacterial ribosomal protein bS21 family.

This Limosilactobacillus reuteri (strain DSM 20016) (Lactobacillus reuteri) protein is Small ribosomal subunit protein bS21.